The primary structure comprises 178 residues: ATP synthase subunit delta (178 aa).

It belongs to the ATPase delta chain family. In terms of assembly, F-type ATPases have 2 components, F(1) - the catalytic core - and F(0) - the membrane proton channel. F(1) has five subunits: alpha(3), beta(3), gamma(1), delta(1), epsilon(1). F(0) has three main subunits: a(1), b(2) and c(10-14). The alpha and beta chains form an alternating ring which encloses part of the gamma chain. F(1) is attached to F(0) by a central stalk formed by the gamma and epsilon chains, while a peripheral stalk is formed by the delta and b chains.

The protein localises to the cell inner membrane. Functionally, f(1)F(0) ATP synthase produces ATP from ADP in the presence of a proton or sodium gradient. F-type ATPases consist of two structural domains, F(1) containing the extramembraneous catalytic core and F(0) containing the membrane proton channel, linked together by a central stalk and a peripheral stalk. During catalysis, ATP synthesis in the catalytic domain of F(1) is coupled via a rotary mechanism of the central stalk subunits to proton translocation. Its function is as follows. This protein is part of the stalk that links CF(0) to CF(1). It either transmits conformational changes from CF(0) to CF(1) or is implicated in proton conduction. The protein is ATP synthase subunit delta of Pseudomonas putida (strain W619).